We begin with the raw amino-acid sequence, 505 residues long: ATP synthase subunit alpha, chloroplastic (505 aa).

170-177 lines the ATP pocket; that stretch reads GDRQTGKT.

Belongs to the ATPase alpha/beta chains family. F-type ATPases have 2 components, CF(1) - the catalytic core - and CF(0) - the membrane proton channel. CF(1) has five subunits: alpha(3), beta(3), gamma(1), delta(1), epsilon(1). CF(0) has four main subunits: a, b, b' and c.

The protein localises to the plastid. It is found in the chloroplast thylakoid membrane. It carries out the reaction ATP + H2O + 4 H(+)(in) = ADP + phosphate + 5 H(+)(out). Its function is as follows. Produces ATP from ADP in the presence of a proton gradient across the membrane. The alpha chain is a regulatory subunit. In Oenothera elata subsp. hookeri (Hooker's evening primrose), this protein is ATP synthase subunit alpha, chloroplastic.